A 246-amino-acid chain; its full sequence is tRNA pseudouridine synthase A (246 aa).

Asp-54 (nucleophile) is an active-site residue. A substrate-binding site is contributed by Tyr-112.

The protein belongs to the tRNA pseudouridine synthase TruA family. Homodimer.

The catalysed reaction is uridine(38/39/40) in tRNA = pseudouridine(38/39/40) in tRNA. Its function is as follows. Formation of pseudouridine at positions 38, 39 and 40 in the anticodon stem and loop of transfer RNAs. The chain is tRNA pseudouridine synthase A from Moorella thermoacetica (strain ATCC 39073 / JCM 9320).